We begin with the raw amino-acid sequence, 65 residues long: Large ribosomal subunit protein bL32 (65 aa).

Belongs to the bacterial ribosomal protein bL32 family.

This chain is Large ribosomal subunit protein bL32, found in Metamycoplasma arthritidis (strain 158L3-1) (Mycoplasma arthritidis).